A 97-amino-acid chain; its full sequence is UPF0235 protein HD_0778 (97 aa).

The protein belongs to the UPF0235 family.

The sequence is that of UPF0235 protein HD_0778 from Haemophilus ducreyi (strain 35000HP / ATCC 700724).